A 384-amino-acid polypeptide reads, in one-letter code: MALQATTTTFCFSGPTFRSTPHSLTSKRPISIKATTSSPSRLSNSRSNLKGRALSSDGSTQESPYVVCFGEMLIDFVPTTSGLSLADAPAFKKAPGGAPANVAVGIARLGGSSAFIGKVGEDEFGYMLANILKDNNVNNDGMRFDPGARTALAFVTLTNEGEREFMFYRNPSADMLLEESELDFDLIKKAKIFHYGSISLITEPCKSAHISAAKAAKEAGVILSYDPNLRLPLWPSADNAREEILSIWETADIIKISEEEIVFLTKGEDPYDDNVVRKLFHPKLKLLLVTEGPEGCRYYTKDFSGRVHGLKVDVVDTTGAGDAFVAGILSQLANDLSLLQDEERLREALMFANACGALTVKVRGAIPALPTKEAVHEALLKAVV.

The transit peptide at Met-1–Arg-46 directs the protein to the chloroplast. The disordered stretch occupies residues Ala-34–Gln-61. A compositionally biased stretch (low complexity) spans Thr-35–Asn-48.

The protein belongs to the carbohydrate kinase PfkB family.

It is found in the plastid. Its subcellular location is the chloroplast. It carries out the reaction D-fructose + ATP = D-fructose 6-phosphate + ADP + H(+). Its pathway is glycan biosynthesis; starch biosynthesis. Functionally, may play an important role in maintaining the flux of carbon towards starch formation. This Arabidopsis thaliana (Mouse-ear cress) protein is Probable fructokinase-6, chloroplastic.